Consider the following 434-residue polypeptide: Carboxy-terminal-processing protease (434 aa).

Positions 1–23 (MIRKVIFFVAGVFLSASLIVMAQ) are cleaved as a signal peptide. A PDZ domain is found at 86-166 (DMRDSTKGEF…TPITLTINRF (81 aa)). Catalysis depends on charge relay system residues serine 294, aspartate 305, and lysine 319. Basic and acidic residues predominate over residues 383 to 392 (HIKGKQESDK). Residues 383–406 (HIKGKQESDKGSGSAAFVPRDPKD) form a disordered region.

This sequence belongs to the peptidase S41A family. In terms of processing, may undergo autocatalytic processing at the C-terminus (398-434 or 425-434 missing).

Its subcellular location is the secreted. The catalysed reaction is The enzyme shows specific recognition of a C-terminal tripeptide, Xaa-Yaa-Zaa, in which Xaa is preferably Ala or Leu, Yaa is preferably Ala or Tyr, and Zaa is preferably Ala, but then cleaves at a variable distance from the C-terminus. A typical cleavage is -Ala-Ala-|-Arg-Ala-Ala-Lys-Glu-Asn-Tyr-Ala-Leu-Ala-Ala.. Involved in protection of the bacterium from thermal and osmotic stresses. In Bartonella bacilliformis (strain ATCC 35685 / KC583 / Herrer 020/F12,63), this protein is Carboxy-terminal-processing protease (ctpA).